Reading from the N-terminus, the 302-residue chain is Nucleotide-binding protein Strop_3101 (302 aa).

Position 26–33 (26–33 (GVSGGGRS)) interacts with ATP. GTP is bound at residue 77 to 80 (DVRS).

This sequence belongs to the RapZ-like family.

Displays ATPase and GTPase activities. This chain is Nucleotide-binding protein Strop_3101, found in Salinispora tropica (strain ATCC BAA-916 / DSM 44818 / JCM 13857 / NBRC 105044 / CNB-440).